A 189-amino-acid polypeptide reads, in one-letter code: Probable nicotinate-nucleotide adenylyltransferase (189 aa).

It belongs to the NadD family.

The enzyme catalyses nicotinate beta-D-ribonucleotide + ATP + H(+) = deamido-NAD(+) + diphosphate. Its pathway is cofactor biosynthesis; NAD(+) biosynthesis; deamido-NAD(+) from nicotinate D-ribonucleotide: step 1/1. Catalyzes the reversible adenylation of nicotinate mononucleotide (NaMN) to nicotinic acid adenine dinucleotide (NaAD). The chain is Probable nicotinate-nucleotide adenylyltransferase from Staphylococcus aureus (strain MRSA252).